Here is a 554-residue protein sequence, read N- to C-terminus: RecBCD enzyme subunit RecD (554 aa).

155-162 (GGPGTGKT) serves as a coordination point for ATP.

The protein belongs to the RecD family. In terms of assembly, heterotrimer of RecB, RecC and RecD. All subunits contribute to DNA-binding.

The enzyme catalyses Couples ATP hydrolysis with the unwinding of duplex DNA at the replication fork by translocating in the 5'-3' direction. This creates two antiparallel DNA single strands (ssDNA). The leading ssDNA polymer is the template for DNA polymerase III holoenzyme which synthesizes a continuous strand.. The catalysed reaction is ATP + H2O = ADP + phosphate + H(+). In terms of biological role, a helicase/nuclease that prepares dsDNA breaks (DSB) for recombinational DNA repair. Binds to DSBs and unwinds DNA via a highly rapid and processive ATP-dependent bidirectional helicase activity. Holoenzyme degrades any linearized DNA that is unable to undergo homologous recombination. In the holoenzyme this subunit has ssDNA-dependent ATPase and 5'-3' helicase activity. When added to pre-assembled RecBC greatly stimulates nuclease activity and augments holoenzyme processivity. Unlike the case in E.coli, suppresses RecA-dependent homologous recombination, is instead required for single-strand annealing pathway repair of DSB. The protein is RecBCD enzyme subunit RecD of Mycolicibacterium smegmatis (strain ATCC 700084 / mc(2)155) (Mycobacterium smegmatis).